Reading from the N-terminus, the 301-residue chain is Envoplakin-like protein (301 aa).

Residues 1-88 (MQASADQVER…ERVTQECAEY (88 aa)) are a coiled coil. 2 disordered regions span residues 18–41 (RLQQDRLNSEQSQALQHQQETGSS) and 118–166 (GLRR…PEPI). The span at 26-41 (SEQSQALQHQQETGSS) shows a compositional bias: polar residues. Basic and acidic residues predominate over residues 136 to 151 (GAQHRAEGDQRPRRAA).

Belongs to the plakin or cytolinker family.

The chain is Envoplakin-like protein (EVPLL) from Homo sapiens (Human).